The primary structure comprises 364 residues: Dihydroorotate dehydrogenase (quinone) (364 aa).

Residues 62–66 (AGFDK) and Thr-86 each bind FMN. Residue Lys-66 participates in substrate binding. 111-115 (NRMGF) contributes to the substrate binding site. FMN is bound by residues Asn-142 and Asn-175. Asn-175 contributes to the substrate binding site. Catalysis depends on Ser-178, which acts as the Nucleophile. Asn-180 provides a ligand contact to substrate. Residues Lys-216 and Thr-244 each coordinate FMN. Substrate is bound at residue 245-246 (NT). FMN contacts are provided by residues Gly-267, Gly-296, and 317–318 (YT).

This sequence belongs to the dihydroorotate dehydrogenase family. Type 2 subfamily. In terms of assembly, monomer. Requires FMN as cofactor.

The protein resides in the cell membrane. The enzyme catalyses (S)-dihydroorotate + a quinone = orotate + a quinol. It functions in the pathway pyrimidine metabolism; UMP biosynthesis via de novo pathway; orotate from (S)-dihydroorotate (quinone route): step 1/1. Functionally, catalyzes the conversion of dihydroorotate to orotate with quinone as electron acceptor. The protein is Dihydroorotate dehydrogenase (quinone) of Anaeromyxobacter dehalogenans (strain 2CP-1 / ATCC BAA-258).